The sequence spans 148 residues: Cytochrome c oxidase subunit 6, mitochondrial (148 aa).

The N-terminal 40 residues, 1–40 (MASFFRTAVRGPSAGLFRAVARPQPIAARVSLFSTSSRFR), are a transit peptide targeting the mitochondrion.

Belongs to the cytochrome c oxidase subunit 5A family. Component of the cytochrome c oxidase (complex IV, CIV), a multisubunit enzyme composed of 11 subunits. The complex is composed of a catalytic core of 3 subunits Cox1, Cox2 and Cox3, encoded in the mitochondrial DNA, and 8 supernumerary subunits Cox4, Cox5a/Cox5, Cox6, Cox7, Cox8, Cox7a/Cox9, Cox6b/Cox12 and Cox6a/Cox13, which are encoded in the nuclear genome. The complex exists as a monomer or a dimer and forms respiratory supercomplexes (SCs) in the inner mitochondrial membrane with NADH-ubiquinone oxidoreductase (complex I, CI) and ubiquinol-cytochrome c oxidoreductase (cytochrome b-c1 complex, complex III, CIII), resulting in various different assemblies (supercomplexes I(1)IV(1), I(1)III(3)IV(2), III(2)IV(1) and III(2)IV(2) as well as larger supercomplexes of compositions like I(1)III(2)IV(5-6)).

The protein resides in the mitochondrion inner membrane. It functions in the pathway energy metabolism; oxidative phosphorylation. Its function is as follows. Component of the cytochrome c oxidase, the last enzyme in the mitochondrial electron transport chain which drives oxidative phosphorylation. The respiratory chain contains 3 multisubunit complexes succinate dehydrogenase (complex II, CII), ubiquinol-cytochrome c oxidoreductase (cytochrome b-c1 complex, complex III, CIII) and cytochrome c oxidase (complex IV, CIV), that cooperate to transfer electrons derived from NADH and succinate to molecular oxygen, creating an electrochemical gradient over the inner membrane that drives transmembrane transport and the ATP synthase. Cytochrome c oxidase is the component of the respiratory chain that catalyzes the reduction of oxygen to water. Electrons originating from reduced cytochrome c in the intermembrane space (IMS) are transferred via the dinuclear copper A center (CU(A)) of Cox2 and heme A of Cox1 to the active site in Cox1, a binuclear center (BNC) formed by heme A3 and copper B (CU(B)). The BNC reduces molecular oxygen to 2 water molecules using 4 electrons from cytochrome c in the IMS and 4 protons from the mitochondrial matrix. This is Cytochrome c oxidase subunit 6, mitochondrial (cox-6) from Neurospora crassa (strain ATCC 24698 / 74-OR23-1A / CBS 708.71 / DSM 1257 / FGSC 987).